An 838-amino-acid polypeptide reads, in one-letter code: E3 ubiquitin-protein ligase RNF19A (838 aa).

Residues 128-351 (DFIECPLCLL…LSPSGCTFWG (224 aa)) form a TRIAD supradomain region. Zn(2+) contacts are provided by Cys132, Cys135, Cys150, His152, Cys155, Cys158, Cys176, Cys179, Cys219, Cys224, Cys241, Cys246, Cys251, Cys254, His259, Cys264, Cys301, and Cys304. The segment at 132 to 179 (CPLCLLRHSKDRFPEIMTCHHRSCVDCLRQYLRIEISESRVNISCPEC) adopts an RING-type 1 zinc-finger fold. Residues 199-264 (EKYEEFMLRR…KQIWHPNQTC (66 aa)) form an IBR-type zinc finger. The RING-type 2; atypical zinc finger occupies 301 to 332 (CPRCAAYIIKMNDGSCNHMTCAVCGCEFCWLC). Cys316 is a catalytic residue. Residues Cys321, Cys324, Cys329, Cys332, His340, and Cys347 each coordinate Zn(2+). 2 helical membrane passes run 368–388 (LVGA…AMII) and 424–444 (VIVS…IMLA). Disordered regions lie at residues 622 to 685 (SKPS…SNMK) and 700 to 721 (QQST…PSVA). Ser631 is modified (phosphoserine). Residues 631 to 644 (SGSSSVDDGSAARS) are compositionally biased toward low complexity. Residues 660–838 (ATKWSKEATA…ELKVAIQTDI (179 aa)) form an interaction with CASR region. Basic residues predominate over residues 671–683 (KKSKSGKLRKKSN). Positions 700 to 717 (QQSTNSSEFEAPSLSDSM) are enriched in polar residues.

The protein belongs to the RBR family. RNF19 subfamily. In terms of assembly, interacts with UBE2L3 and UBE2L6. Also interacts with transcription factor Sp1. Interacts with SNCAIP, CASR and VCP.

The protein localises to the membrane. Its subcellular location is the cytoplasm. The protein resides in the cytoskeleton. It localises to the microtubule organizing center. It is found in the centrosome. It catalyses the reaction [E2 ubiquitin-conjugating enzyme]-S-ubiquitinyl-L-cysteine + [acceptor protein]-L-lysine = [E2 ubiquitin-conjugating enzyme]-L-cysteine + [acceptor protein]-N(6)-ubiquitinyl-L-lysine.. It participates in protein modification; protein ubiquitination. E3 ubiquitin-protein ligase which accepts ubiquitin from E2 ubiquitin-conjugating enzymes UBE2L3 and UBE2L6 in the form of a thioester and then directly transfers the ubiquitin to targeted substrates, such as SNCAIP or CASR. This is E3 ubiquitin-protein ligase RNF19A (RNF19A) from Sus scrofa (Pig).